Here is a 27-residue protein sequence, read N- to C-terminus: Histone H1.3, embryonic (27 aa).

An H15 domain is found at H1–N27.

It belongs to the histone H1/H5 family.

Its subcellular location is the nucleus. The protein resides in the chromosome. Its function is as follows. Histones H1 are necessary for the condensation of nucleosome chains into higher-order structures. This chain is Histone H1.3, embryonic, found in Parechinus angulosus (Angulate sea urchin).